The primary structure comprises 155 residues: Protein U1 (155 aa).

The protein belongs to the nanovirus U1 protein family.

The protein is Protein U1 (DNA-U1) of Cicer arietinum (Chickpea).